A 248-amino-acid chain; its full sequence is Anamorsin homolog (248 aa).

Positions 4–130 (FKGLQKSLYI…ETGSSARLSF (127 aa)) are N-terminal SAM-like domain. Residues 131 to 161 (AKKSPSMNVWKISGDDEELIDEEELLDEEDK) form a linker region. 4 residues coordinate [2Fe-2S] cluster: C172, C181, C184, and C186. Positions 172-186 (CSTTGKRKACKNCSC) are fe-S binding site A. [4Fe-4S] cluster-binding residues include C209, C212, C220, and C223. 2 short sequence motifs (cx2C motif) span residues 209–212 (CGNC) and 220–223 (CSTC). The interval 209 to 223 (CGNCYLGDAFRCSTC) is fe-S binding site B.

Belongs to the anamorsin family. As to quaternary structure, monomer. The cofactor is [2Fe-2S] cluster. It depends on [4Fe-4S] cluster as a cofactor.

It localises to the cytoplasm. The protein resides in the mitochondrion intermembrane space. In terms of biological role, component of the cytosolic iron-sulfur (Fe-S) protein assembly (CIA) machinery. Required for the maturation of extramitochondrial Fe-S proteins. Part of an electron transfer chain functioning in an early step of cytosolic Fe-S biogenesis, facilitating the de novo assembly of a [4Fe-4S] cluster on the cytosolic Fe-S scaffold complex. Electrons are transferred from NADPH via a FAD- and FMN-containing diflavin oxidoreductase. Together with the diflavin oxidoreductase, also required for the assembly of the diferric tyrosyl radical cofactor of ribonucleotide reductase (RNR), probably by providing electrons for reduction during radical cofactor maturation in the catalytic small subunit. The chain is Anamorsin homolog from Drosophila mojavensis (Fruit fly).